The chain runs to 384 residues: Putative exopolyphosphatase (384 aa).

Mn(2+) contacts are provided by Asp40, Asp42, Asp116, His138, and Asp200.

This sequence belongs to the PPase class C family. Mn(2+) serves as cofactor.

The catalysed reaction is [phosphate](n) + H2O = [phosphate](n-1) + phosphate + H(+). In terms of biological role, degradation of inorganic polyphosphates. The sequence is that of Putative exopolyphosphatase from Schizosaccharomyces pombe (strain 972 / ATCC 24843) (Fission yeast).